A 448-amino-acid polypeptide reads, in one-letter code: Arginine synthetase ArcE (448 aa).

In terms of assembly, probably forms homotetramers and higher assemblies of tetramers. Mg(2+) is required as a cofactor.

It carries out the reaction L-arginine + ADP + phosphate + H(+) = L-citrulline + NH4(+) + ATP. Its pathway is amino-acid biosynthesis; L-proline biosynthesis. It participates in amino-acid degradation; L-arginine degradation. It functions in the pathway amino-acid biosynthesis; L-arginine biosynthesis. Arginine deiminase involved in an arginine synthetase pathway, which provides citrulline and ornithine, the precursors for proline biosynthesis. Catalyzes the conversion of L-arginine to citrulline while conserving the energy of arginine deimination to generate ATP from ADP and free phosphate. Is specific toward L-arginine and cannot use D-arginine, agmatine, guanidine, L-alanine-L-arginine dipeptide and L-arginine-L-alanine dipeptide. Can also use CDP, GDP or UDP, with lower activity (38%, 8.4% and 13.3%, respectively). The enzyme can also catalyze the reverse reaction: the ATP-dependent generation of arginine from citrulline in a single reaction by using free ammonia, without the requirement of aspartic acid. In vivo, most likely functions in the arginine catabolism to produce citrulline for proline biosynthesis while also generating ATP, but it can also contribute to arginine biosynthesis when the necessary precursors such as citrulline are abundant. This chain is Arginine synthetase ArcE, found in Thermococcus kodakarensis (strain ATCC BAA-918 / JCM 12380 / KOD1) (Pyrococcus kodakaraensis (strain KOD1)).